We begin with the raw amino-acid sequence, 416 residues long: Probable glucan 1,3-beta-glucosidase A (416 aa).

A signal peptide spans 1–22 (MIFKFSQKALVALYLVVGLAEA). Glu211 (proton donor) is an active-site residue. 2 disulfide bridges follow: Cys291-Cys415 and Cys316-Cys342. Glu308 serves as the catalytic Nucleophile. Asn344 is a glycosylation site (N-linked (GlcNAc...) asparagine).

Belongs to the glycosyl hydrolase 5 (cellulase A) family. As to quaternary structure, monomer. Mn(2+) serves as cofactor.

The protein resides in the secreted. It carries out the reaction Successive hydrolysis of beta-D-glucose units from the non-reducing ends of (1-&gt;3)-beta-D-glucans, releasing alpha-glucose.. Its function is as follows. Beta-glucanases participate in the metabolism of beta-glucan, the main structural component of the cell wall. It could also function biosynthetically as a transglycosylase. The sequence is that of Probable glucan 1,3-beta-glucosidase A (exgA) from Aspergillus fumigatus (strain CBS 144.89 / FGSC A1163 / CEA10) (Neosartorya fumigata).